The following is a 1007-amino-acid chain: Inversin-A (1007 aa).

16 ANK repeats span residues 9-39 (SLASPVQAAAVTGDKTTLLKLIASSPEVIDQ), 43-72 (LGRTPLMYSVLGDRRSCAEALLKHGAQVNH), 76-105 (SGRTALHLAAQTGNHRLLKLLLSRKADCTH), 109-140 (RDITAVHLSTRHQDTRCLALILKYTPPGQVDA), 144-173 (RKQTALHWSAYYNRPRHVRLLVRHGSNIGI), 177-209 (EGKIPLHWAAGHKDPEAALTVRCLLEAAPTESL), 216-246 (EGRTPLHLAVGDGNQEVVRLLTSYRGCNVAP), 250-279 (LFRTPLHWAALLGYTPIAHLLLETNNSPNI), 284-313 (QGATPLHYAAQGNCPDTVRVLLSHISVRDE), 317-346 (EGRTAFMWAAGKGSDEVVRTMLELDPELEV), 352-381 (YGGTALHAASLSGQITTVRILLENRVQVDA), 385-414 (MKHTALFRACEMGHREVISTLIKGGAKVHL), 418-447 (DGRSPLHWAALGGNANVCQILIENNINPDA), 451-480 (EGRTPLQCAAYGGYIGCMEVLMENKADPNI), 484-513 (NGRTALHWSCNNGYLDAVKLLLGYSAFPNQ), and 519-549 (ERYTPLDYALLGGHQEVIQFMLEHGALSIAA). A D-box 1 motif is present at residues 486 to 494 (RTALHWSCN). The IQ 1 domain maps to 551 to 580 (QDIAASKIQAVYKGHKVRRAFQERKNLLMK). 2 stretches are compositionally biased toward basic and acidic residues: residues 585 to 599 (RKGAAAKKREGENRQ) and 608 to 652 (GKQK…HQEE). Disordered stretches follow at residues 585-837 (RKGA…KEFS) and 868-893 (SAKSGQRPLTETQSPEKACQGSSALK). The span at 684–701 (IQSSPIEHVHTNSIQTRM) shows a compositional bias: polar residues. The span at 702-712 (SPSRTSISHSS) shows a compositional bias: low complexity. A compositionally biased stretch (polar residues) spans 727–745 (NPTQNNTQPRRTSRPQIES). Over residues 751–771 (HRIEDLVQKESRRKSHREERK) the composition is skewed to basic and acidic residues. Positions 772 to 784 (GSHRQRASSHHRL) are enriched in basic residues. Over residues 870-893 (KSGQRPLTETQSPEKACQGSSALK) the composition is skewed to polar residues. The short motif at 964–972 (RKQLFQRKK) is the D-box 2 element. An IQ 2 domain is found at 971 to 1000 (KKHAATVIQKAWRTYCIRKSSRKTRHSHLR).

As to quaternary structure, interacts with apc2. Binds calmodulin.

It is found in the cytoplasm. Its subcellular location is the cytoskeleton. In terms of biological role, required for normal renal development and establishment of left-right axis. Probably acts as a molecular switch between different Wnt signaling pathways. Inhibits the canonical Wnt pathway by targeting cytoplasmic disheveled for degradation by the ubiquitin-proteasome. This suggests that it is required in renal development to oppose the repression of terminal differentiation of tubular epithelial cells by Wnt signaling. Plays a central role in convergent extension movements in gastrulating embryos, a processus regulated by Wnt signaling. The polypeptide is Inversin-A (invs-a) (Xenopus laevis (African clawed frog)).